A 114-amino-acid chain; its full sequence is Non-specific lipid-transfer protein 1 (114 aa).

The signal sequence occupies residues 1 to 25 (MIKGLAITVVAVLAVVQLLARPSDA). 4 disulfides stabilise this stretch: Cys29–Cys76, Cys39–Cys53, Cys54–Cys99, and Cys74–Cys113.

The protein belongs to the plant LTP family. As to expression, expressed in seeds and, at very low levels, in pulp of fruit (at protein level).

Plant non-specific lipid-transfer proteins transfer phospholipids as well as galactolipids across membranes. May play a role in wax or cutin deposition in the cell walls of expanding epidermal cells and certain secretory tissues. This chain is Non-specific lipid-transfer protein 1, found in Actinidia chinensis var. chinensis (Chinese soft-hair kiwi).